Here is a 465-residue protein sequence, read N- to C-terminus: 3-isopropylmalate dehydratase large subunit (465 aa).

Cys347, Cys407, and Cys410 together coordinate [4Fe-4S] cluster. Positions 416 to 443 (DTLRPGERSASTSNRNFEGRQGPGGRTH) are disordered.

It belongs to the aconitase/IPM isomerase family. LeuC type 1 subfamily. Heterodimer of LeuC and LeuD. Requires [4Fe-4S] cluster as cofactor.

It carries out the reaction (2R,3S)-3-isopropylmalate = (2S)-2-isopropylmalate. Its pathway is amino-acid biosynthesis; L-leucine biosynthesis; L-leucine from 3-methyl-2-oxobutanoate: step 2/4. Its function is as follows. Catalyzes the isomerization between 2-isopropylmalate and 3-isopropylmalate, via the formation of 2-isopropylmaleate. The chain is 3-isopropylmalate dehydratase large subunit from Frankia alni (strain DSM 45986 / CECT 9034 / ACN14a).